Reading from the N-terminus, the 654-residue chain is Coiled-coil domain-containing protein 30 (654 aa).

Residues 38-65 (TLESRRDPNSSLQKEFPQHQDEDQSRAA) are disordered. Residues 53 to 62 (FPQHQDEDQS) show a composition bias toward basic and acidic residues. Coiled coils occupy residues 97–244 (REER…LDNA) and 276–559 (KSQQ…QIIR). The disordered stretch occupies residues 614–654 (AAAIPKSPEPLSRSQDSESGYINVTSLKETHNTQGDQKPEL). The span at 625-654 (SRSQDSESGYINVTSLKETHNTQGDQKPEL) shows a compositional bias: polar residues.

Belongs to the prefoldin subunit beta family.

The polypeptide is Coiled-coil domain-containing protein 30 (Ccdc30) (Mus musculus (Mouse)).